We begin with the raw amino-acid sequence, 376 residues long: Histidinol-phosphate aminotransferase (376 aa).

The segment at 1-21 (MQPRDLSAHEPYVPGRGTKEV) is disordered. K222 carries the post-translational modification N6-(pyridoxal phosphate)lysine.

Belongs to the class-II pyridoxal-phosphate-dependent aminotransferase family. Histidinol-phosphate aminotransferase subfamily. The cofactor is pyridoxal 5'-phosphate.

It carries out the reaction L-histidinol phosphate + 2-oxoglutarate = 3-(imidazol-4-yl)-2-oxopropyl phosphate + L-glutamate. The protein operates within amino-acid biosynthesis; L-histidine biosynthesis; L-histidine from 5-phospho-alpha-D-ribose 1-diphosphate: step 7/9. The sequence is that of Histidinol-phosphate aminotransferase from Haloquadratum walsbyi (strain DSM 16790 / HBSQ001).